A 514-amino-acid polypeptide reads, in one-letter code: Major facilitator superfamily domain-containing protein 4A (514 aa).

Helical transmembrane passes span 19 to 39, 53 to 73, 82 to 102, 107 to 127, and 139 to 159; these read LTYW…GPTL, ISWV…LGGV, LWAL…IPFC, VLAL…TVAN, and AVFL…SPLI. N177 and N203 each carry an N-linked (GlcNAc...) asparagine glycan. Helical transmembrane passes span 221-241, 307-327, 347-367, 376-396, 400-420, 438-458, and 466-486; these read YAFW…LMLL, FFAI…LTGA, VAGY…LLSI, ATMV…LLIF, VVFL…TFPS, VLVT…GSIF, and FLVC…LLLF.

It belongs to the major facilitator superfamily.

The protein localises to the membrane. The chain is Major facilitator superfamily domain-containing protein 4A (MFSD4A) from Pongo abelii (Sumatran orangutan).